Consider the following 366-residue polypeptide: Chorismate synthase (366 aa).

NADP(+)-binding residues include Arg-48 and Arg-54. Residues 125-127 (RSS), 238-239 (NA), Gly-278, 293-297 (KPTSS), and Arg-319 each bind FMN.

The protein belongs to the chorismate synthase family. Homotetramer. FMNH2 serves as cofactor.

The enzyme catalyses 5-O-(1-carboxyvinyl)-3-phosphoshikimate = chorismate + phosphate. It participates in metabolic intermediate biosynthesis; chorismate biosynthesis; chorismate from D-erythrose 4-phosphate and phosphoenolpyruvate: step 7/7. In terms of biological role, catalyzes the anti-1,4-elimination of the C-3 phosphate and the C-6 proR hydrogen from 5-enolpyruvylshikimate-3-phosphate (EPSP) to yield chorismate, which is the branch point compound that serves as the starting substrate for the three terminal pathways of aromatic amino acid biosynthesis. This reaction introduces a second double bond into the aromatic ring system. This Neisseria gonorrhoeae (strain ATCC 700825 / FA 1090) protein is Chorismate synthase.